A 380-amino-acid polypeptide reads, in one-letter code: Histidinol-phosphate aminotransferase (380 aa).

N6-(pyridoxal phosphate)lysine is present on lysine 232.

This sequence belongs to the class-II pyridoxal-phosphate-dependent aminotransferase family. Histidinol-phosphate aminotransferase subfamily. As to quaternary structure, homodimer. Pyridoxal 5'-phosphate is required as a cofactor.

The catalysed reaction is L-histidinol phosphate + 2-oxoglutarate = 3-(imidazol-4-yl)-2-oxopropyl phosphate + L-glutamate. It participates in amino-acid biosynthesis; L-histidine biosynthesis; L-histidine from 5-phospho-alpha-D-ribose 1-diphosphate: step 7/9. This is Histidinol-phosphate aminotransferase from Mycobacterium bovis (strain BCG / Pasteur 1173P2).